The following is a 419-amino-acid chain: Cysteine desulfurase (419 aa).

Residues 69–70, N157, Q185, and 205–207 each bind pyridoxal 5'-phosphate; these read AT and SAH. K208 carries the post-translational modification N6-(pyridoxal phosphate)lysine. T245 is a binding site for pyridoxal 5'-phosphate. C333 acts as the Cysteine persulfide intermediate in catalysis. C333 is a binding site for [2Fe-2S] cluster. The interval 392–419 is disordered; sequence TPIQDEVRDDNRASSNSLNRGSAASKES. A compositionally biased stretch (polar residues) spans 404–413; it reads ASSNSLNRGS.

The protein belongs to the class-V pyridoxal-phosphate-dependent aminotransferase family. NifS/IscS subfamily. In terms of assembly, homodimer. Pyridoxal 5'-phosphate is required as a cofactor.

The catalysed reaction is (sulfur carrier)-H + L-cysteine = (sulfur carrier)-SH + L-alanine. Catalyzes the removal of elemental sulfur atoms from cysteine to produce alanine. Seems to participate in the biosynthesis of the nitrogenase metalloclusters by providing the inorganic sulfur required for the Fe-S core formation. This Frankia sp. (strain EuIK1) protein is Cysteine desulfurase.